The chain runs to 370 residues: Histidinol-phosphate aminotransferase (370 aa).

N6-(pyridoxal phosphate)lysine is present on K229.

This sequence belongs to the class-II pyridoxal-phosphate-dependent aminotransferase family. Histidinol-phosphate aminotransferase subfamily. Homodimer. The cofactor is pyridoxal 5'-phosphate.

It catalyses the reaction L-histidinol phosphate + 2-oxoglutarate = 3-(imidazol-4-yl)-2-oxopropyl phosphate + L-glutamate. It participates in amino-acid biosynthesis; L-histidine biosynthesis; L-histidine from 5-phospho-alpha-D-ribose 1-diphosphate: step 7/9. The chain is Histidinol-phosphate aminotransferase from Helicobacter hepaticus (strain ATCC 51449 / 3B1).